The chain runs to 455 residues: Bifunctional protein GlmU (455 aa).

A pyrophosphorylase region spans residues 1-226 (MGLSVVILAA…EFEILGVNDR (226 aa)). UDP-N-acetyl-alpha-D-glucosamine-binding positions include 8-11 (LAAG), Lys-22, Gln-73, 78-79 (GT), 99-101 (YGD), Gly-136, Glu-151, Asn-166, and Asn-224. Asp-101 lines the Mg(2+) pocket. A Mg(2+)-binding site is contributed by Asn-224. The interval 227–247 (TQLASLERVWQRNVAEKIMAK) is linker. Positions 248 to 455 (GVSIADPNRF…WQRSVKKTDK (208 aa)) are N-acetyltransferase. UDP-N-acetyl-alpha-D-glucosamine contacts are provided by Arg-330 and Lys-348. His-360 functions as the Proton acceptor in the catalytic mechanism. Residues Tyr-363 and Asn-374 each coordinate UDP-N-acetyl-alpha-D-glucosamine. Acetyl-CoA contacts are provided by residues Ala-377, 383 to 384 (NY), Ser-402, Ala-420, and Arg-437.

This sequence in the N-terminal section; belongs to the N-acetylglucosamine-1-phosphate uridyltransferase family. The protein in the C-terminal section; belongs to the transferase hexapeptide repeat family. Homotrimer. The cofactor is Mg(2+).

It is found in the cytoplasm. It catalyses the reaction alpha-D-glucosamine 1-phosphate + acetyl-CoA = N-acetyl-alpha-D-glucosamine 1-phosphate + CoA + H(+). The enzyme catalyses N-acetyl-alpha-D-glucosamine 1-phosphate + UTP + H(+) = UDP-N-acetyl-alpha-D-glucosamine + diphosphate. Its pathway is nucleotide-sugar biosynthesis; UDP-N-acetyl-alpha-D-glucosamine biosynthesis; N-acetyl-alpha-D-glucosamine 1-phosphate from alpha-D-glucosamine 6-phosphate (route II): step 2/2. It functions in the pathway nucleotide-sugar biosynthesis; UDP-N-acetyl-alpha-D-glucosamine biosynthesis; UDP-N-acetyl-alpha-D-glucosamine from N-acetyl-alpha-D-glucosamine 1-phosphate: step 1/1. It participates in bacterial outer membrane biogenesis; LPS lipid A biosynthesis. Functionally, catalyzes the last two sequential reactions in the de novo biosynthetic pathway for UDP-N-acetylglucosamine (UDP-GlcNAc). The C-terminal domain catalyzes the transfer of acetyl group from acetyl coenzyme A to glucosamine-1-phosphate (GlcN-1-P) to produce N-acetylglucosamine-1-phosphate (GlcNAc-1-P), which is converted into UDP-GlcNAc by the transfer of uridine 5-monophosphate (from uridine 5-triphosphate), a reaction catalyzed by the N-terminal domain. The chain is Bifunctional protein GlmU from Francisella tularensis subsp. tularensis (strain SCHU S4 / Schu 4).